A 188-amino-acid polypeptide reads, in one-letter code: ATP synthase subunit delta (188 aa).

The protein belongs to the ATPase delta chain family. F-type ATPases have 2 components, F(1) - the catalytic core - and F(0) - the membrane proton channel. F(1) has five subunits: alpha(3), beta(3), gamma(1), delta(1), epsilon(1). F(0) has three main subunits: a(1), b(2) and c(10-14). The alpha and beta chains form an alternating ring which encloses part of the gamma chain. F(1) is attached to F(0) by a central stalk formed by the gamma and epsilon chains, while a peripheral stalk is formed by the delta and b chains.

The protein resides in the cell inner membrane. F(1)F(0) ATP synthase produces ATP from ADP in the presence of a proton or sodium gradient. F-type ATPases consist of two structural domains, F(1) containing the extramembraneous catalytic core and F(0) containing the membrane proton channel, linked together by a central stalk and a peripheral stalk. During catalysis, ATP synthesis in the catalytic domain of F(1) is coupled via a rotary mechanism of the central stalk subunits to proton translocation. In terms of biological role, this protein is part of the stalk that links CF(0) to CF(1). It either transmits conformational changes from CF(0) to CF(1) or is implicated in proton conduction. The sequence is that of ATP synthase subunit delta from Sinorhizobium fredii (strain NBRC 101917 / NGR234).